We begin with the raw amino-acid sequence, 618 residues long: Methylmalonyl-CoA mutase small subunit (618 aa).

This sequence belongs to the methylmalonyl-CoA mutase family. In terms of assembly, heterodimer of an alpha and a beta chain. Requires adenosylcob(III)alamin as cofactor.

It carries out the reaction (R)-methylmalonyl-CoA = succinyl-CoA. It functions in the pathway metabolic intermediate metabolism; propanoyl-CoA degradation; succinyl-CoA from propanoyl-CoA: step 3/3. Catalyzes the isomerization of succinyl-CoA to methylmalonyl-CoA during synthesis of propionate from tricarboxylic acid-cycle intermediates. This chain is Methylmalonyl-CoA mutase small subunit (mutA), found in Porphyromonas gingivalis (strain ATCC BAA-308 / W83).